Consider the following 76-residue polypeptide: UPF0291 protein BT9727_1737 (76 aa).

This sequence belongs to the UPF0291 family.

The protein localises to the cytoplasm. This is UPF0291 protein BT9727_1737 from Bacillus thuringiensis subsp. konkukian (strain 97-27).